The sequence spans 358 residues: Homoserine O-acetyltransferase (358 aa).

The region spanning 41–343 (NAVLICHALT…DYGHDAFLVD (303 aa)) is the AB hydrolase-1 domain. The active-site Nucleophile is the Ser-143. Arg-212 is a substrate binding site. Active-site residues include Asp-304 and His-337. Substrate is bound at residue Asp-338.

Homodimer.

It is found in the cytoplasm. It catalyses the reaction L-homoserine + acetyl-CoA = O-acetyl-L-homoserine + CoA. It participates in amino-acid biosynthesis; L-methionine biosynthesis via de novo pathway; O-acetyl-L-homoserine from L-homoserine: step 1/1. In terms of biological role, transfers an acetyl group from acetyl-CoA to L-homoserine, forming acetyl-L-homoserine. Utilizes a ping-pong kinetic mechanism in which the acetyl group of acetyl-CoA is initially transferred to the enzyme to form an acetyl-enzyme intermediate before subsequent transfer to homoserine to form the final product, O-acetylhomoserine. This Haemophilus influenzae (strain ATCC 51907 / DSM 11121 / KW20 / Rd) protein is Homoserine O-acetyltransferase.